A 476-amino-acid polypeptide reads, in one-letter code: MKISLPAFEKAKVLVVGDVMLDRYWAGPTARISPEAPVPVVKVEQLEDRPGGAANVAINIATLGGSASLAGIVGVDETADALTVGVRALGVEPNWHKVADKPTITKLRVMSRNQQLLRLDFEESYSQAESDALLAQSLSELDKVDVAVLSDYAKGALISPQSFIEAANAKGVKVLVDPKGSDFSKYRGAYLLTPNMSEFEVVVGKVESEADLVAKAQGLLQAFDLTAMLVTRSEKGMTLITKDQPELHIPTVAREVYDVTGAGDTVISALATAIAAGSDLPQACAIANTAAGIVVAKLGTSTVTRLELIEALSLSHGESGFGAVSEDQLAYALEQAKLRGERVVMTNGCFDILHAGHVSYLQQARALGDRLIVAVNTDASVKRLKGEGRPVNSEDRRMTVLAALASVDWVVPFSEDTPQRIISRLLPDLLVKGGDYKVEDIAGGSEVMAAGGQVKVLGFEDGISTTAIIQNIMANQ.

The tract at residues 1–319 is ribokinase; it reads MKISLPAFEK…EALSLSHGES (319 aa). 195–198 serves as a coordination point for ATP; the sequence is NMSE. Asp264 is a catalytic residue. The tract at residues 345-476 is cytidylyltransferase; it reads MTNGCFDILH…AIIQNIMANQ (132 aa).

The protein in the N-terminal section; belongs to the carbohydrate kinase PfkB family. In the C-terminal section; belongs to the cytidylyltransferase family. Homodimer.

The catalysed reaction is D-glycero-beta-D-manno-heptose 7-phosphate + ATP = D-glycero-beta-D-manno-heptose 1,7-bisphosphate + ADP + H(+). It catalyses the reaction D-glycero-beta-D-manno-heptose 1-phosphate + ATP + H(+) = ADP-D-glycero-beta-D-manno-heptose + diphosphate. It participates in nucleotide-sugar biosynthesis; ADP-L-glycero-beta-D-manno-heptose biosynthesis; ADP-L-glycero-beta-D-manno-heptose from D-glycero-beta-D-manno-heptose 7-phosphate: step 1/4. It functions in the pathway nucleotide-sugar biosynthesis; ADP-L-glycero-beta-D-manno-heptose biosynthesis; ADP-L-glycero-beta-D-manno-heptose from D-glycero-beta-D-manno-heptose 7-phosphate: step 3/4. Catalyzes the phosphorylation of D-glycero-D-manno-heptose 7-phosphate at the C-1 position to selectively form D-glycero-beta-D-manno-heptose-1,7-bisphosphate. In terms of biological role, catalyzes the ADP transfer from ATP to D-glycero-beta-D-manno-heptose 1-phosphate, yielding ADP-D-glycero-beta-D-manno-heptose. The sequence is that of Bifunctional protein HldE from Shewanella pealeana (strain ATCC 700345 / ANG-SQ1).